A 297-amino-acid polypeptide reads, in one-letter code: Aspartate carbamoyltransferase catalytic subunit (297 aa).

Carbamoyl phosphate contacts are provided by R49 and T50. K77 serves as a coordination point for L-aspartate. Residues R99, H129, and Q132 each contribute to the carbamoyl phosphate site. The L-aspartate site is built by R162 and R215. G256 and P257 together coordinate carbamoyl phosphate.

The protein belongs to the aspartate/ornithine carbamoyltransferase superfamily. ATCase family. In terms of assembly, heterododecamer (2C3:3R2) of six catalytic PyrB chains organized as two trimers (C3), and six regulatory PyrI chains organized as three dimers (R2).

The enzyme catalyses carbamoyl phosphate + L-aspartate = N-carbamoyl-L-aspartate + phosphate + H(+). The protein operates within pyrimidine metabolism; UMP biosynthesis via de novo pathway; (S)-dihydroorotate from bicarbonate: step 2/3. In terms of biological role, catalyzes the condensation of carbamoyl phosphate and aspartate to form carbamoyl aspartate and inorganic phosphate, the committed step in the de novo pyrimidine nucleotide biosynthesis pathway. This Legionella pneumophila (strain Corby) protein is Aspartate carbamoyltransferase catalytic subunit.